The sequence spans 1765 residues: MEERYYPVIFPDERNFRPFTSDSLAAIEKRIAIQKERKKSKDKAAAEPQPRPQLDLKASRKLPKLYGDIPPELVAKPLEDLDPFYKDHKTFMVLNKKRTIYRFSAKRALFILGPFNPLRSLMIRISVHSVFSMFIICTVIINCMFMANSMERSFDNDIPEYVFIGIYILEAVIKILARGFIVDEFSFLRDPWNWLDFIVIGTAIATCFPGSQVNLSALRTFRVFRALKAISVISGLKVIVGALLRSVKKLVDVMVLTLFCLSIFALVGQQLFMGILNQKCIKHNCGPNPASNKDCFEKEKDSEDFIMCGTWLGSRPCPNGSTCDKTTLNPDNNYTKFDNFGWSFLAMFRVMTQDSWERLYRQILRTSGIYFVFFFVVVIFLGSFYLLNLTLAVVTMAYEEQNRNVAAETEAKEKMFQEAQQLLREEKEALVAMGIDRSSLNSLQASSFSPKKRKFFGSKTRKSFFMRGSKTAQASASDSEDDASKNPQLLEQTKRLSQNLPVDLFDEHVDPLHRQRALSAVSILTITMQEQEKFQEPCFPCGKNLASKYLVWDCSPQWLCIKKVLRTIMTDPFTELAITICIIINTVFLAVEHHNMDDNLKTILKIGNWVFTGIFIAEMCLKIIALDPYHYFRHGWNVFDSIVALLSLADVLYNTLSDNNRSFLASLRVLRVFKLAKSWPTLNTLIKIIGHSVGALGNLTVVLTIVVFIFSVVGMRLFGTKFNKTAYATQERPRRRWHMDNFYHSFLVVFRILCGEWIENMWGCMQDMDGSPLCIIVFVLIMVIGKLVVLNLFIALLLNSFSNEEKDGSLEGETRKTKVQLALDRFRRAFSFMLHALQSFCCKKCRRKNSPKPKETTESFAGENKDSILPDARPWKEYDTDMALYTGQAGAPLAPLAEVEDDVEYCGEGGALPTSQHSAGVQAGDLPPETKQLTSPDDQGVEMEVFSEEDLHLSIQSPRKKSDAVSMLSECSTIDLNDIFRNLQKTVSPKKQPDRCFPKGLSCHFLCHKTDKRKSPWVLWWNIRKTCYQIVKHSWFESFIIFVILLSSGALIFEDVNLPSRPQVEKLLRCTDNIFTFIFLLEMILKWVAFGFRRYFTSAWCWLDFLIVVVSVLSLMNLPSLKSFRTLRALRPLRALSQFEGMKVVVYALISAIPAILNVLLVCLIFWLVFCILGVNLFSGKFGRCINGTDINMYLDFTEVPNRSQCNISNYSWKVPQVNFDNVGNAYLALLQVATYKGWLEIMNAAVDSREKDEQPDFEANLYAYLYFVVFIIFGSFFTLNLFIGVIIDNFNQQQKKLGGQDIFMTEEQKKYYNAMKKLGTKKPQKPIPRPLNKCQAFVFDLVTSQVFDVIILGLIVLNMIIMMAESADQPKDVKKTFDILNIAFVVIFTIECLIKVFALRQHYFTNGWNLFDCVVVVLSIISTLVSRLEDSDISFPPTLFRVVRLARIGRILRLVRAARGIRTLLFALMMSLPSLFNIGLLLFLVMFIYAIFGMSWFSKVKKGSGIDDIFNFETFTGSMLCLFQITTSAGWDTLLNPMLEAKEHCNSSSQDSCQQPQIAVVYFVSYIIISFLIVVNMYIAVILENFNTATEESEDPLGEDDFEIFYEVWEKFDPEASQFIQYSALSDFADALPEPLRVAKPNKFQFLVMDLPMVMGDRLHCMDVLFAFTTRVLGDSSGLDTMKTMMEEKFMEANPFKKLYEPIVTTTKRKEEEQGAAVIQRAYRKHMEKMVKLRLKDRSSSSHQVFCNGDLSSLDVAKVKVHND.

The Cytoplasmic portion of the chain corresponds to 1–126; that stretch reads MEERYYPVIF…PLRSLMIRIS (126 aa). The I repeat unit spans residues 115–403; sequence FNPLRSLMIR…VTMAYEEQNR (289 aa). Residues 127–148 form a helical membrane-spanning segment; the sequence is VHSVFSMFIICTVIINCMFMAN. Residues 149 to 157 are Extracellular-facing; that stretch reads SMERSFDND. The helical transmembrane segment at 158–177 threads the bilayer; sequence IPEYVFIGIYILEAVIKILA. The Cytoplasmic portion of the chain corresponds to 178–189; sequence RGFIVDEFSFLR. A helical membrane pass occupies residues 190 to 209; sequence DPWNWLDFIVIGTAIATCFP. Residues 210–216 lie on the Extracellular side of the membrane; sequence GSQVNLS. N-linked (GlcNAc...) asparagine glycosylation is present at Asn214. A helical; Voltage-sensor transmembrane segment spans residues 217-236; it reads ALRTFRVFRALKAISVISGL. Topologically, residues 237–252 are cytoplasmic; the sequence is KVIVGALLRSVKKLVD. A helical membrane pass occupies residues 253-266; it reads VMVLTLFCLSIFAL. At 267-339 the chain is on the extracellular side; it reads VGQQLFMGIL…PDNNYTKFDN (73 aa). A disulfide bridge connects residues Cys280 and Cys317. Residues Asn319 and Asn333 are each glycosylated (N-linked (GlcNAc...) asparagine). Positions 340-364 form an intramembrane region, pore-forming; the sequence is FGWSFLAMFRVMTQDSWERLYRQIL. The Extracellular segment spans residues 365-371; that stretch reads RTSGIYF. The chain crosses the membrane as a helical span at residues 372–397; the sequence is VFFFVVVIFLGSFYLLNLTLAVVTMA. Over 398–567 the chain is Cytoplasmic; the sequence is YEEQNRNVAA…WLCIKKVLRT (170 aa). Residues 554-820 form an II repeat; that stretch reads CSPQWLCIKK…EGETRKTKVQ (267 aa). A helical transmembrane segment spans residues 568–591; sequence IMTDPFTELAITICIIINTVFLAV. Over 592 to 602 the chain is Extracellular; the sequence is EHHNMDDNLKT. The chain crosses the membrane as a helical span at residues 603 to 626; the sequence is ILKIGNWVFTGIFIAEMCLKIIAL. The Cytoplasmic segment spans residues 627–634; sequence DPYHYFRH. A helical transmembrane segment spans residues 635 to 656; the sequence is GWNVFDSIVALLSLADVLYNTL. Residues 657–662 lie on the Extracellular side of the membrane; it reads SDNNRS. Asn660 carries N-linked (GlcNAc...) asparagine glycosylation. A helical; Voltage-sensor membrane pass occupies residues 663-682; that stretch reads FLASLRVLRVFKLAKSWPTL. Topologically, residues 683-697 are cytoplasmic; the sequence is NTLIKIIGHSVGALG. A helical transmembrane segment spans residues 698–720; the sequence is NLTVVLTIVVFIFSVVGMRLFGT. Topologically, residues 721 to 741 are extracellular; the sequence is KFNKTAYATQERPRRRWHMDN. The N-linked (GlcNAc...) asparagine glycan is linked to Asn723. Residues 742–762 constitute an intramembrane region (pore-forming); the sequence is FYHSFLVVFRILCGEWIENMW. Topologically, residues 763–772 are extracellular; that stretch reads GCMQDMDGSP. A disulfide bond links Cys764 and Cys774. A helical transmembrane segment spans residues 773 to 798; that stretch reads LCIIVFVLIMVIGKLVVLNLFIALLL. Residues 799 to 1029 are Cytoplasmic-facing; it reads NSFSNEEKDG…WWNIRKTCYQ (231 aa). The III repeat unit spans residues 1022–1319; the sequence is NIRKTCYQIV…KKYYNAMKKL (298 aa). Residues 1030-1052 traverse the membrane as a helical segment; sequence IVKHSWFESFIIFVILLSSGALI. Topologically, residues 1053-1066 are extracellular; it reads FEDVNLPSRPQVEK. The chain crosses the membrane as a helical span at residues 1067 to 1092; sequence LLRCTDNIFTFIFLLEMILKWVAFGF. The Cytoplasmic segment spans residues 1093-1098; that stretch reads RRYFTS. The helical transmembrane segment at 1099–1116 threads the bilayer; sequence AWCWLDFLIVVVSVLSLM. Position 1117 (Asn1117) is a topological domain, extracellular. A helical; Voltage-sensor membrane pass occupies residues 1118–1139; the sequence is LPSLKSFRTLRALRPLRALSQF. The Cytoplasmic segment spans residues 1140–1158; the sequence is EGMKVVVYALISAIPAILN. The helical transmembrane segment at 1159 to 1180 threads the bilayer; sequence VLLVCLIFWLVFCILGVNLFSG. Over 1181-1223 the chain is Extracellular; the sequence is KFGRCINGTDINMYLDFTEVPNRSQCNISNYSWKVPQVNFDNV. N-linked (GlcNAc...) asparagine glycosylation is found at Asn1187, Asn1202, Asn1207, and Asn1210. The segment at residues 1224-1245 is an intramembrane region (pore-forming); that stretch reads GNAYLALLQVATYKGWLEIMNA. Residues 1246–1261 lie on the Extracellular side of the membrane; it reads AVDSREKDEQPDFEAN. A helical membrane pass occupies residues 1262–1288; sequence LYAYLYFVVFIIFGSFFTLNLFIGVII. Residues 1289–1341 are Cytoplasmic-facing; sequence DNFNQQQKKLGGQDIFMTEEQKKYYNAMKKLGTKKPQKPIPRPLNKCQAFVFD. One copy of the IV repeat lies at 1328–1619; it reads IPRPLNKCQA…WEKFDPEASQ (292 aa). The helical transmembrane segment at 1342–1365 threads the bilayer; sequence LVTSQVFDVIILGLIVLNMIIMMA. At 1366 to 1376 the chain is on the extracellular side; the sequence is ESADQPKDVKK. The helical transmembrane segment at 1377-1400 threads the bilayer; the sequence is TFDILNIAFVVIFTIECLIKVFAL. The Cytoplasmic segment spans residues 1401–1406; that stretch reads RQHYFT. Residues 1407-1430 form a helical membrane-spanning segment; the sequence is NGWNLFDCVVVVLSIISTLVSRLE. Over 1431 to 1440 the chain is Extracellular; sequence DSDISFPPTL. A helical; Voltage-sensor transmembrane segment spans residues 1441–1463; it reads FRVVRLARIGRILRLVRAARGIR. Topologically, residues 1464–1478 are cytoplasmic; that stretch reads TLLFALMMSLPSLFN. Residues 1479–1501 traverse the membrane as a helical segment; sequence IGLLLFLVMFIYAIFGMSWFSKV. At 1502-1515 the chain is on the extracellular side; it reads KKGSGIDDIFNFET. The pore-forming intramembrane region spans 1516–1538; it reads FTGSMLCLFQITTSAGWDTLLNP. The Extracellular segment spans residues 1539–1559; that stretch reads MLEAKEHCNSSSQDSCQQPQI. N-linked (GlcNAc...) asparagine glycosylation is present at Asn1547. The helical transmembrane segment at 1560–1584 threads the bilayer; sequence AVVYFVSYIIISFLIVVNMYIAVIL. At 1585–1765 the chain is on the cytoplasmic side; the sequence is ENFNTATEES…DVAKVKVHND (181 aa).

This sequence belongs to the sodium channel (TC 1.A.1.10) family. Nav1.9/SCN11A subfamily. The voltage-resistant sodium channel consists of an ion conducting pore forming alpha-subunit regulated by one or more auxiliary subunits SCN1B, SCN2B and SCN3B. Expressed (at protein level) in myenteric sensory neurons. Expressed in small sensory neurons of the dorsal root ganglia (C-fiber neurons) and trigeminal ganglia.

Its subcellular location is the cell membrane. It catalyses the reaction Na(+)(in) = Na(+)(out). Its activity is regulated as follows. Activity is not sensitive to inhibition by tetrodotoxin. Sodium channel mediating the voltage-dependent sodium ion permeability of excitable membranes. Assuming opened or closed conformations in response to the voltage difference across the membrane, the protein forms a sodium-selective channel through which sodium ions may pass in accordance with their electrochemical gradient. Involved in membrane depolarization during action potential in nociceptors which function as key relay stations for the electrical transmission of pain signals from the periphery to the central nervous system. Also involved in rapid BDNF-evoked neuronal depolarization. The chain is Sodium channel protein type 11 subunit alpha from Rattus norvegicus (Rat).